We begin with the raw amino-acid sequence, 503 residues long: Ferulic acid decarboxylase 1 (503 aa).

3 residues coordinate Mn(2+): Asn-170, His-193, and Glu-236. Prenylated FMN-binding positions include 170-175, 192-193, and Glu-236; these read NWSIAR and QH. The active-site Proton donor is Glu-285. Prenylated FMN is bound at residue Lys-394.

It belongs to the UbiD family. UbiD-like/FDC subfamily. As to quaternary structure, homodimer. May form higher order oligomers. Requires Mn(2+) as cofactor. The cofactor is prenylated FMN.

It localises to the cytoplasm. It carries out the reaction (E)-4-coumarate + H(+) = 4-vinylphenol + CO2. It catalyses the reaction (E)-cinnamate + H(+) = styrene + CO2. The catalysed reaction is (E)-ferulate + H(+) = 2-methoxy-4-vinylphenol + CO2. Catalyzes the reversible decarboxylation of aromatic carboxylic acids like ferulic acid, p-coumaric acid or cinnamic acid, producing the corresponding vinyl derivatives 4-vinylphenol, 4-vinylguaiacol, and styrene, respectively, which play the role of aroma metabolites. Not essential for ubiquinone synthesis. This Saccharomyces cerevisiae (strain ATCC 204508 / S288c) (Baker's yeast) protein is Ferulic acid decarboxylase 1.